A 97-amino-acid chain; its full sequence is Acylphosphatase (97 aa).

In terms of domain architecture, Acylphosphatase-like spans 7–97; the sequence is RLTAWVHGHV…QERFEGFVER (91 aa). Active-site residues include Arg-22 and Asn-40.

It belongs to the acylphosphatase family.

The catalysed reaction is an acyl phosphate + H2O = a carboxylate + phosphate + H(+). In Mycobacterium avium (strain 104), this protein is Acylphosphatase (acyP).